Consider the following 458-residue polypeptide: Putative long chain fatty acid-CoA ligase VraA (458 aa).

It belongs to the ATP-dependent AMP-binding enzyme family.

This is Putative long chain fatty acid-CoA ligase VraA (vraA) from Staphylococcus aureus (strain MRSA252).